Reading from the N-terminus, the 198-residue chain is UPF0312 protein PFL_5802 (198 aa).

The signal sequence occupies residues 1–23; that stretch reads MLKKTLAALAIGSAVLAAGQVMA.

Belongs to the UPF0312 family. Type 1 subfamily.

Its subcellular location is the periplasm. The protein is UPF0312 protein PFL_5802 of Pseudomonas fluorescens (strain ATCC BAA-477 / NRRL B-23932 / Pf-5).